A 620-amino-acid polypeptide reads, in one-letter code: KIF-binding protein (620 aa).

2 coiled-coil regions span residues 30 to 64 (YKSK…QDIL) and 133 to 169 (LIKS…QLQN).

The protein belongs to the KIF-binding protein family.

Its subcellular location is the cytoplasm. The protein localises to the cytoskeleton. Functionally, activator of KIF1B plus-end-directed microtubule motor activity. Required for organization of axonal microtubules, and axonal outgrowth and maintenance during peripheral and central nervous system development. This is KIF-binding protein (kifbp) from Dictyostelium discoideum (Social amoeba).